A 405-amino-acid polypeptide reads, in one-letter code: Amino acid transporter AVT1I (405 aa).

Helical transmembrane passes span 22–42 (CFNA…YSLA), 46–66 (WLSL…SLLI), 93–113 (IIVS…FLIL), 140–160 (FMAT…LSVL), 169–189 (LATT…GIGF), 201–221 (IPTA…LPTL), 234–254 (VLLI…VLGY), 278–298 (VAIY…ITPT), 318–338 (LLIS…LPFF), 343–363 (SLVG…LCYL), and 377–397 (IMLF…TYIA).

Belongs to the amino acid/polyamine transporter 2 family. Amino acid/auxin permease (AAAP) (TC 2.A.18.5) subfamily.

It localises to the membrane. This Arabidopsis thaliana (Mouse-ear cress) protein is Amino acid transporter AVT1I.